Here is a 389-residue protein sequence, read N- to C-terminus: Large envelope protein (389 aa).

2 stretches are compositionally biased toward polar residues: residues Met-1–Pro-10 and Ser-85–Thr-95. Disordered regions lie at residues Met-1–Leu-54 and Ile-73–Pro-106. Gly-2 carries N-myristoyl glycine; by host lipidation. The tract at residues Gly-2–Ala-108 is pre-S1. The pre-S stretch occupies residues Gly-2–Asn-163. Topologically, residues Gly-2–Gly-170 are virion surface; in external conformation. Residues Gly-2–Gly-242 lie on the Intravirion; in internal conformation side of the membrane. The interval Val-109 to Asn-163 is pre-S2. The chain crosses the membrane as a helical span at residues Phe-171–Ile-191. The Intravirion; in external conformation portion of the chain corresponds to Pro-192–Gly-242. A helical membrane pass occupies residues Phe-243 to Tyr-263. Residues Gln-264 to Ser-337 are Virion surface-facing. The N-linked (GlcNAc...) asparagine; by host glycan is linked to Asn-309. A helical membrane pass occupies residues Leu-338–Ile-358. Topologically, residues Trp-359 to Trp-364 are intravirion. The helical transmembrane segment at Gly-365 to Val-387 threads the bilayer. Over Tyr-388 to Ile-389 the chain is Virion surface.

This sequence belongs to the orthohepadnavirus major surface antigen family. In terms of assembly, li-HBsAg interacts with capsid protein and with HDV Large delta antigen. Isoform M associates with host chaperone CANX through its pre-S2 N glycan. This association may be essential for M proper secretion. Post-translationally, isoform M is N-terminally acetylated by host at a ratio of 90%, and N-glycosylated by host at the pre-S2 region. Myristoylated.

It localises to the virion membrane. Its function is as follows. The large envelope protein exists in two topological conformations, one which is termed 'external' or Le-HBsAg and the other 'internal' or Li-HBsAg. In its external conformation the protein attaches the virus to cell receptors and thereby initiating infection. This interaction determines the species specificity and liver tropism. This attachment induces virion internalization predominantly through caveolin-mediated endocytosis. The large envelope protein also assures fusion between virion membrane and endosomal membrane. In its internal conformation the protein plays a role in virion morphogenesis and mediates the contact with the nucleocapsid like a matrix protein. In terms of biological role, the middle envelope protein plays an important role in the budding of the virion. It is involved in the induction of budding in a nucleocapsid independent way. In this process the majority of envelope proteins bud to form subviral lipoprotein particles of 22 nm of diameter that do not contain a nucleocapsid. This is Large envelope protein from Homo sapiens (Human).